A 346-amino-acid polypeptide reads, in one-letter code: Methylthioribose-1-phosphate isomerase (346 aa).

Residues 50–52 (RGA), arginine 93, and glutamine 196 contribute to the substrate site. Aspartate 237 serves as the catalytic Proton donor. 247–248 (NK) contributes to the substrate binding site.

Belongs to the eIF-2B alpha/beta/delta subunits family. MtnA subfamily.

The catalysed reaction is 5-(methylsulfanyl)-alpha-D-ribose 1-phosphate = 5-(methylsulfanyl)-D-ribulose 1-phosphate. It functions in the pathway amino-acid biosynthesis; L-methionine biosynthesis via salvage pathway; L-methionine from S-methyl-5-thio-alpha-D-ribose 1-phosphate: step 1/6. Catalyzes the interconversion of methylthioribose-1-phosphate (MTR-1-P) into methylthioribulose-1-phosphate (MTRu-1-P). In Alkalilimnicola ehrlichii (strain ATCC BAA-1101 / DSM 17681 / MLHE-1), this protein is Methylthioribose-1-phosphate isomerase.